The sequence spans 65 residues: Toxin CsEM1 (65 aa).

The region spanning 1–65 is the LCN-type CS-alpha/beta domain; it reads KEGYLVNSYT…VWPLPNKTCN (65 aa). 4 disulfide bridges follow: cysteine 12–cysteine 64, cysteine 16–cysteine 40, cysteine 25–cysteine 45, and cysteine 29–cysteine 47.

It belongs to the long (4 C-C) scorpion toxin superfamily. Sodium channel inhibitor family. Beta subfamily. As to expression, expressed by the venom gland.

The protein localises to the secreted. Functionally, beta toxins bind voltage-independently at site-4 of sodium channels (Nav) and shift the voltage of activation toward more negative potentials thereby affecting sodium channel activation and promoting spontaneous and repetitive firing. Highly potent. The polypeptide is Toxin CsEM1 (Centruroides sculpturatus (Arizona bark scorpion)).